Consider the following 352-residue polypeptide: C-C chemokine receptor type 5 (352 aa).

Over 1–30 (MDYQVSSPTYDIDYYTSEPCQKVNVKQIAA) the chain is Extracellular. The residue at position 3 (Y3) is a Sulfotyrosine. 2 O-linked (GalNAc...) serine glycosylation sites follow: S6 and S7. Residues Y10, Y14, and Y15 each carry the sulfotyrosine modification. Cystine bridges form between C20/C269 and C101/C178. The helical transmembrane segment at 31–58 (RLLPPLYSLVFIFGFVGNILVVLILINC) threads the bilayer. Residues 59–68 (KRLKSMTDIY) lie on the Cytoplasmic side of the membrane. A helical transmembrane segment spans residues 69–89 (LLNLAISDLFFLLTVPFWAHY). Topologically, residues 90-102 (AAAQWDFGNTMCQ) are extracellular. A helical transmembrane segment spans residues 103-124 (LLTGLYFIGFFSGIFFIILLTI). The Cytoplasmic portion of the chain corresponds to 125-141 (DRYLAIVHAVFALKART). A helical membrane pass occupies residues 142–166 (VTFGVVTSVITWVVAVFASLPGIIF). The Extracellular portion of the chain corresponds to 167 to 198 (TRSQREGLHYTCSSHFPYSQYQFWKNFQTLKI). The chain crosses the membrane as a helical span at residues 199 to 218 (VILGLVLPLLVMVICYSGIL). Over 219-235 (KTLLRCRNEKKRHRAVR) the chain is Cytoplasmic. A helical transmembrane segment spans residues 236-260 (LIFTIMIVYFLFWAPYNIVLLLNTF). Residues 261–277 (QEFFGLNNCSSSNRLDQ) are Extracellular-facing. Residues 278 to 301 (AMQVTETLGMTHCCINPIIYAFVG) traverse the membrane as a helical segment. Residues 302–352 (EKFRNYLLVFFQKHIAKRFCKCCSIFQQEAPERASSVYTRSTGEQETSVGL) are Cytoplasmic-facing. 3 S-palmitoyl cysteine lipidation sites follow: C321, C323, and C324. A phosphoserine; by BARK1 mark is found at S336, S337, S342, and S349.

Belongs to the G-protein coupled receptor 1 family. Interacts with PRAF2. Efficient ligand binding to CCL3/MIP-1alpha and CCL4/MIP-1beta requires sulfation, O-glycosylation and sialic acid modifications. Glycosylation on Ser-6 is required for efficient binding of CCL4. Interacts with GRK2. Interacts with ARRB1 and ARRB2. Interacts with CNIH4. Interacts with S100A4; this interaction stimulates T-lymphocyte chemotaxis. Post-translationally, sulfated on at least 2 of the N-terminal tyrosines. Sulfation is required for efficient binding of the chemokines, CCL3 and CCL4. Palmitoylation in the C-terminal is important for cell surface expression. In terms of processing, phosphorylation on serine residues in the C-terminal is stimulated by binding CC chemokines especially by APO-RANTES. Post-translationally, O-glycosylated, but not N-glycosylated. Ser-6 appears to be the major site even if Ser-7 may be also O-glycosylated. Also sialylated glycans present which contribute to chemokine binding. Thr-16 and Ser-17 may also be glycosylated and, if so, with small moieties such as a T-antigen.

The protein localises to the cell membrane. Functionally, receptor for a number of inflammatory CC-chemokines including CCL3/MIP-1-alpha, CCL4/MIP-1-beta and RANTES and subsequently transduces a signal by increasing the intracellular calcium ion level. May play a role in the control of granulocytic lineage proliferation or differentiation. Participates in T-lymphocyte migration to the infection site by acting as a chemotactic receptor. This Trachypithecus francoisi (Francois' leaf monkey) protein is C-C chemokine receptor type 5 (CCR5).